A 316-amino-acid polypeptide reads, in one-letter code: Tyrosine--tRNA ligase 2 (316 aa).

Residues Tyr-26, Tyr-146, Gln-150, Asp-153, and Gln-168 each contribute to the L-tyrosine site. Residues 219 to 223 carry the 'KMSKS' region motif; that stretch reads KMSKS. Lys-222 is an ATP binding site.

The protein belongs to the class-I aminoacyl-tRNA synthetase family. TyrS type 4 subfamily. Homodimer.

Its subcellular location is the cytoplasm. The catalysed reaction is tRNA(Tyr) + L-tyrosine + ATP = L-tyrosyl-tRNA(Tyr) + AMP + diphosphate + H(+). Functionally, catalyzes the attachment of tyrosine to tRNA(Tyr) in a two-step reaction: tyrosine is first activated by ATP to form Tyr-AMP and then transferred to the acceptor end of tRNA(Tyr). This chain is Tyrosine--tRNA ligase 2, found in Pyrobaculum aerophilum (strain ATCC 51768 / DSM 7523 / JCM 9630 / CIP 104966 / NBRC 100827 / IM2).